Reading from the N-terminus, the 88-residue chain is Large ribosomal subunit protein bL27 (88 aa).

Positions Met-1–Val-23 are disordered.

This sequence belongs to the bacterial ribosomal protein bL27 family.

This chain is Large ribosomal subunit protein bL27, found in Methylorubrum populi (strain ATCC BAA-705 / NCIMB 13946 / BJ001) (Methylobacterium populi).